A 94-amino-acid chain; its full sequence is Lipoate-protein ligase A subunit 2 (94 aa).

Heterodimer composed of LplA and LplB.

It catalyses the reaction L-lysyl-[lipoyl-carrier protein] + (R)-lipoate + ATP = N(6)-[(R)-lipoyl]-L-lysyl-[lipoyl-carrier protein] + AMP + diphosphate + H(+). It functions in the pathway protein modification; protein lipoylation via exogenous pathway; protein N(6)-(lipoyl)lysine from lipoate: step 1/2. The protein operates within protein modification; protein lipoylation via exogenous pathway; protein N(6)-(lipoyl)lysine from lipoate: step 2/2. Functionally, part of a lipoate-protein ligase complex that catalyzes both the ATP-dependent activation of exogenously supplied lipoate to lipoyl-AMP and the transfer of the activated lipoyl onto the lipoyl domains of lipoate-dependent enzymes. Can also use octanoate as substrate. This chain is Lipoate-protein ligase A subunit 2 (lplB), found in Thermoplasma acidophilum (strain ATCC 25905 / DSM 1728 / JCM 9062 / NBRC 15155 / AMRC-C165).